A 387-amino-acid chain; its full sequence is MLPLLLPLLWAGALALEGIFQLEVPESVTVQEGLCVFVPCTFFYPRHTFIKISLACGYWFREGDNPLRDAPVATNDPARQVREETRGRFRLLGNPREKNCSLSIRDARRRDSGSYFFRVEEAMMKYNYKDPPLSVHVTALTHRPDILIPGALKSGRPRNLVCSVPWACEQGTPPIFSWIGTSVSPLSPTTALSSVVTLIPQPQDHGSRLTCQVTLPGAGVTTTRTVRLNVSYPPQNLTLTVFQGDGTASTTLRNESSLQVLEGQSLRLVCAVDSNPPARLSWAQDNLILSPSQPNPGMLELPQMHLRNEGEFTCQARNPLGSQQVSLRLFVQRKSGPMAEVVLVAIGEAAVKILLLFLCLIILRVKSHRRKAAKAATGVEAAKVVKG.

The first 15 residues, Met-1–Ala-15, serve as a signal peptide directing secretion. The Ig-like V-type domain occupies Leu-16–Thr-138. The Extracellular portion of the chain corresponds to Leu-16 to Val-341. Intrachain disulfides connect Cys-35-Cys-168, Cys-40-Cys-100, and Cys-162-Cys-211. Asn-99 carries N-linked (GlcNAc...) asparagine glycosylation. Arg-118 is a binding site for N-acetylneuraminate. One can recognise an Ig-like C2-type 1 domain in the interval Pro-144 to Arg-227. Residues Asn-229, Asn-236, and Asn-254 are each glycosylated (N-linked (GlcNAc...) asparagine). Residues Pro-234–Ser-326 enclose the Ig-like C2-type 2 domain. The cysteines at positions 270 and 314 are disulfide-linked. Residues Val-342–Ile-362 form a helical membrane-spanning segment. The Cytoplasmic portion of the chain corresponds to Leu-363 to Gly-387.

Belongs to the immunoglobulin superfamily. SIGLEC (sialic acid binding Ig-like lectin) family.

Its subcellular location is the membrane. In terms of biological role, putative adhesion molecule that mediates sialic-acid dependent binding to cells. The polypeptide is Sialic acid-binding Ig-like lectin 13 (SIGLEC13) (Pan troglodytes (Chimpanzee)).